A 234-amino-acid polypeptide reads, in one-letter code: MKIHVVNNQVEGATVALDILREKLNGGTKVLGLATGSSPLEFYRLIRESDLDFSDVTSVNLDEYVGLGEESDQSYIHFMKENLFNTKPFKQSYLPNGLATDVVAETERYNKILAEHPVDFQILGIGRNGHIGFNEPGAPFDGQTHLVELAPSTIEANARFFDNPEDVPKQAISMGIANIMAAKTIVLMAYGQEKADAIKATVEGAVTEDVPASVLQNHDNVILILDQAAASKLV.

D62 serves as the catalytic Proton acceptor; for enolization step. Catalysis depends on N128, which acts as the For ring-opening step. The active-site Proton acceptor; for ring-opening step is the H130. The For ring-opening step role is filled by E135.

This sequence belongs to the glucosamine/galactosamine-6-phosphate isomerase family. NagB subfamily.

It catalyses the reaction alpha-D-glucosamine 6-phosphate + H2O = beta-D-fructose 6-phosphate + NH4(+). It functions in the pathway amino-sugar metabolism; N-acetylneuraminate degradation; D-fructose 6-phosphate from N-acetylneuraminate: step 5/5. Catalyzes the reversible isomerization-deamination of glucosamine 6-phosphate (GlcN6P) to form fructose 6-phosphate (Fru6P) and ammonium ion. The sequence is that of Glucosamine-6-phosphate deaminase from Streptococcus suis (strain 98HAH33).